The chain runs to 608 residues: Threonine--tRNA ligase (608 aa).

Positions 1-143 are editing domain; that stretch reads MRVLYIHAER…VFKPEEAKTE (143 aa). Catalytic regions lie at residues 194 to 490 and 195 to 490; these read PKYL…PRLP and KYLD…PRLP. The Zn(2+) site is built by Cys287, His338, and His459.

This sequence belongs to the class-II aminoacyl-tRNA synthetase family. Homodimer. The cofactor is Zn(2+).

It is found in the cytoplasm. It catalyses the reaction tRNA(Thr) + L-threonine + ATP = L-threonyl-tRNA(Thr) + AMP + diphosphate + H(+). Catalyzes the attachment of threonine to tRNA(Thr) in a two-step reaction: L-threonine is first activated by ATP to form Thr-AMP and then transferred to the acceptor end of tRNA(Thr). Also edits incorrectly charged L-seryl-tRNA(Thr). This Pyrobaculum arsenaticum (strain DSM 13514 / JCM 11321 / PZ6) protein is Threonine--tRNA ligase.